The chain runs to 136 residues: Large ribosomal subunit protein uL16 (136 aa).

Belongs to the universal ribosomal protein uL16 family. Part of the 50S ribosomal subunit.

Its function is as follows. Binds 23S rRNA and is also seen to make contacts with the A and possibly P site tRNAs. This is Large ribosomal subunit protein uL16 from Sodalis glossinidius (strain morsitans).